We begin with the raw amino-acid sequence, 150 residues long: Putative HTH-type transcriptional regulator HI_0379 (150 aa).

Positions 2–131 (KLTSKGRYAV…NEITLAELVN (130 aa)) constitute an HTH rrf2-type domain.

This chain is Putative HTH-type transcriptional regulator HI_0379, found in Haemophilus influenzae (strain ATCC 51907 / DSM 11121 / KW20 / Rd).